The primary structure comprises 301 residues: Type II restriction enzyme BslI subunit beta (301 aa).

A CHC2-type zinc finger spans residues 62–82; it reads CPDGHTKWNQNLTKEMTCSEC.

As to quaternary structure, heterotetramer of two alpha and two beta subunits. The alpha subunit is believed to be responsible for DNA recognition, while the beta subunit is thought to mediate cleavage. It depends on Zn(2+) as a cofactor.

It catalyses the reaction Endonucleolytic cleavage of DNA to give specific double-stranded fragments with terminal 5'-phosphates.. Functionally, a P subtype restriction enzyme that recognizes the double-stranded sequence 5'-CCN(7)GG-3' and cleaves after N-7. In Bacillus sp. (strain NEB-606), this protein is Type II restriction enzyme BslI subunit beta.